We begin with the raw amino-acid sequence, 188 residues long: Transcription antitermination protein NusB (188 aa).

The interval 154-188 (RAANPGAVSGSDAPVAPWDDSEELPAEDEAEDSRP) is disordered. The span at 172 to 188 (DDSEELPAEDEAEDSRP) shows a compositional bias: acidic residues.

It belongs to the NusB family.

Involved in transcription antitermination. Required for transcription of ribosomal RNA (rRNA) genes. Binds specifically to the boxA antiterminator sequence of the ribosomal RNA (rrn) operons. In Corynebacterium efficiens (strain DSM 44549 / YS-314 / AJ 12310 / JCM 11189 / NBRC 100395), this protein is Transcription antitermination protein NusB.